A 706-amino-acid chain; its full sequence is K(+)-insensitive pyrophosphate-energized proton pump (706 aa).

5 consecutive transmembrane segments (helical) span residues 1–21 (MTAL…AIWA), 62–82 (VVIF…GFAI), 83–103 (GAIL…RANV), 129–149 (LLVA…LIHF), and 164–184 (VALG…GGIF). Residue Lys186 coordinates substrate. 4 residues coordinate Mg(2+): Asp189, Asp193, Asn216, and Asp219. Transmembrane regions (helical) follow at residues 231–251 (LFET…IFFG), 263–283 (TLPL…TFFV), 300–320 (IATG…LIGF), 330–350 (GLAL…IIWI), 393–413 (IVII…GIAI), and 414–434 (ATTT…FGPV). A Mg(2+)-binding site is contributed by Asp436. Helical transmembrane passes span 467 to 487 (AVTK…LFAA), 516 to 536 (YVVV…AMGM), 585 to 605 (IIPS…IYAI), and 616 to 636 (AFSA…FVAI). Ca(2+) is bound by residues Asp646, Asp672, and Asp676. Lys679 lines the substrate pocket. Residues 685-705 (AVNPMIKITNIVALLLLAILA) form a helical membrane-spanning segment.

Belongs to the H(+)-translocating pyrophosphatase (TC 3.A.10) family. K(+)-insensitive subfamily. In terms of assembly, homodimer. Mg(2+) serves as cofactor.

The protein resides in the cell inner membrane. The enzyme catalyses diphosphate + H2O + H(+)(in) = 2 phosphate + 2 H(+)(out). Proton pump that utilizes the energy of pyrophosphate hydrolysis as the driving force for proton movement across the membrane. Generates a proton motive force. This is K(+)-insensitive pyrophosphate-energized proton pump from Rhodopseudomonas palustris (strain ATCC BAA-98 / CGA009).